Reading from the N-terminus, the 346-residue chain is Methionine import ATP-binding protein MetN 1 (346 aa).

The 240-residue stretch at Ile-2–Val-241 folds into the ABC transporter domain. An ATP-binding site is contributed by Gly-38–Ser-45.

The protein belongs to the ABC transporter superfamily. Methionine importer (TC 3.A.1.24) family. As to quaternary structure, the complex is composed of two ATP-binding proteins (MetN), two transmembrane proteins (MetI) and a solute-binding protein (MetQ).

It localises to the cell membrane. The catalysed reaction is L-methionine(out) + ATP + H2O = L-methionine(in) + ADP + phosphate + H(+). It catalyses the reaction D-methionine(out) + ATP + H2O = D-methionine(in) + ADP + phosphate + H(+). Its function is as follows. Part of the ABC transporter complex MetNIQ involved in methionine import. Responsible for energy coupling to the transport system. The protein is Methionine import ATP-binding protein MetN 1 of Bacillus cereus (strain ZK / E33L).